Here is a 456-residue protein sequence, read N- to C-terminus: Shufflon protein D' (456 aa).

The segment at 1 to 361 is constant region; sequence MKKYDRGWAS…TGAILSCQSG (361 aa). The variable region stretch occupies residues 362–456; sequence TWRKSNSGST…KCSYVVACQN (95 aa).

This Escherichia coli protein is Shufflon protein D'.